Here is a 78-residue protein sequence, read N- to C-terminus: Probable cytochrome c oxidase subunit 6B (78 aa).

One can recognise a CHCH domain in the interval 21-64 (TKHCWANYVDYYGCVKHYNGDNSKCQTFFNSMNSLCPAAWISEW). A Cx9C motif motif is present at residues 24-34 (CWANYVDYYGC). 2 disulfides stabilise this stretch: Cys24–Cys56 and Cys34–Cys45. Residues 45 to 56 (CQTFFNSMNSLC) carry the Cx10C motif motif.

It belongs to the cytochrome c oxidase subunit 6B family. Component of the cytochrome c oxidase (complex IV, CIV), a multisubunit enzyme composed of a catalytic core of 3 subunits and several supernumerary subunits. The complex exists as a monomer or a dimer and forms supercomplexes (SCs) in the inner mitochondrial membrane with ubiquinol-cytochrome c oxidoreductase (cytochrome b-c1 complex, complex III, CIII).

The protein resides in the mitochondrion inner membrane. It participates in energy metabolism; oxidative phosphorylation. In terms of biological role, component of the cytochrome c oxidase, the last enzyme in the mitochondrial electron transport chain which drives oxidative phosphorylation. The respiratory chain contains 3 multisubunit complexes succinate dehydrogenase (complex II, CII), ubiquinol-cytochrome c oxidoreductase (cytochrome b-c1 complex, complex III, CIII) and cytochrome c oxidase (complex IV, CIV), that cooperate to transfer electrons derived from NADH and succinate to molecular oxygen, creating an electrochemical gradient over the inner membrane that drives transmembrane transport and the ATP synthase. Cytochrome c oxidase is the component of the respiratory chain that catalyzes the reduction of oxygen to water. Electrons originating from reduced cytochrome c in the intermembrane space (IMS) are transferred via the dinuclear copper A center (CU(A)) of subunit 2 and heme A of subunit 1 to the active site in subunit 1, a binuclear center (BNC) formed by heme A3 and copper B (CU(B)). The BNC reduces molecular oxygen to 2 water molecules using 4 electrons from cytochrome c in the IMS and 4 protons from the mitochondrial matrix. The sequence is that of Probable cytochrome c oxidase subunit 6B from Dictyostelium discoideum (Social amoeba).